The primary structure comprises 573 residues: Phosphoenolpyruvate-protein phosphotransferase (573 aa).

His190 (tele-phosphohistidine intermediate) is an active-site residue. Phosphoenolpyruvate-binding residues include Arg297 and Arg332. Mg(2+) contacts are provided by Glu431 and Asp455. Residues 454–455 (ND) and Arg465 contribute to the phosphoenolpyruvate site. The Proton donor role is filled by Cys502.

This sequence belongs to the PEP-utilizing enzyme family. Homodimer. It depends on Mg(2+) as a cofactor.

It localises to the cytoplasm. The enzyme catalyses L-histidyl-[protein] + phosphoenolpyruvate = N(pros)-phospho-L-histidyl-[protein] + pyruvate. Irreversibly inhibited the sulfhydryl reagent N-ethylmaleimide (NEM). General (non sugar-specific) component of the phosphoenolpyruvate-dependent sugar phosphotransferase system (sugar PTS). This major carbohydrate active-transport system catalyzes the phosphorylation of incoming sugar substrates concomitantly with their translocation across the cell membrane. Enzyme I transfers the phosphoryl group from phosphoenolpyruvate (PEP) to the phosphoryl carrier protein (HPr). This is Phosphoenolpyruvate-protein phosphotransferase (ptsI) from Mycoplasma capricolum subsp. capricolum (strain California kid / ATCC 27343 / NCTC 10154).